A 627-amino-acid chain; its full sequence is DNA-directed RNA polymerase subunit gamma (627 aa).

Positions 70, 72, 85, and 88 each coordinate Zn(2+). Residues Asp-468, Asp-470, and Asp-472 each contribute to the Mg(2+) site.

Belongs to the RNA polymerase beta' chain family. RpoC1 subfamily. As to quaternary structure, in cyanobacteria the RNAP catalytic core is composed of 2 alpha, 1 beta, 1 beta', 1 gamma and 1 omega subunit. When a sigma factor is associated with the core the holoenzyme is formed, which can initiate transcription. Requires Mg(2+) as cofactor. The cofactor is Zn(2+).

The catalysed reaction is RNA(n) + a ribonucleoside 5'-triphosphate = RNA(n+1) + diphosphate. DNA-dependent RNA polymerase catalyzes the transcription of DNA into RNA using the four ribonucleoside triphosphates as substrates. In Synechococcus sp. (strain JA-3-3Ab) (Cyanobacteria bacterium Yellowstone A-Prime), this protein is DNA-directed RNA polymerase subunit gamma.